A 156-amino-acid polypeptide reads, in one-letter code: MPRKGSVPKRDVLPDPIHNSKLVTKLINKIMLDGKRGTAQRILYSAFDLVKERSGREAVEVFEEAIDNIMPVLEVKARRVGGSNYQVPVEVRPERRTTLGLRWLVNYSRLRGEKTMEERLANEILDAANNTGGAVKKREDTHKMAEANKAFAHYRW.

It belongs to the universal ribosomal protein uS7 family. In terms of assembly, part of the 30S ribosomal subunit. Contacts proteins S9 and S11.

In terms of biological role, one of the primary rRNA binding proteins, it binds directly to 16S rRNA where it nucleates assembly of the head domain of the 30S subunit. Is located at the subunit interface close to the decoding center, probably blocks exit of the E-site tRNA. This chain is Small ribosomal subunit protein uS7, found in Staphylococcus saprophyticus subsp. saprophyticus (strain ATCC 15305 / DSM 20229 / NCIMB 8711 / NCTC 7292 / S-41).